A 736-amino-acid chain; its full sequence is Replication restart protein PriA (736 aa).

A Helicase ATP-binding domain is found at 230 to 396 (DFKGNISKEN…KEGRIRTFNF (167 aa)). 243–250 (GPTGSGKT) is an ATP binding site. The DEAH box motif lies at 339–342 (DEEH). Positions 452, 455, 461, 464, 479, 482, 492, and 495 each coordinate Zn(2+). One can recognise a Helicase C-terminal domain in the interval 487–643 (GLVESCPRCG…EELERRKALG (157 aa)).

Belongs to the helicase family. PriA subfamily. In terms of assembly, component of the replication restart primosome. Zn(2+) is required as a cofactor.

The enzyme catalyses Couples ATP hydrolysis with the unwinding of duplex DNA by translocating in the 3'-5' direction.. It catalyses the reaction ATP + H2O = ADP + phosphate + H(+). In terms of biological role, initiates the restart of stalled replication forks, which reloads the replicative helicase on sites other than the origin of replication. Recognizes and binds to abandoned replication forks and remodels them to uncover a helicase loading site. Promotes assembly of the primosome at these replication forks. The polypeptide is Replication restart protein PriA (Thermotoga maritima (strain ATCC 43589 / DSM 3109 / JCM 10099 / NBRC 100826 / MSB8)).